A 562-amino-acid polypeptide reads, in one-letter code: Vacuolar basic amino acid transporter 1 (562 aa).

The Vacuolar segment spans residues 1–30 (MQTLDETSNLLPPPEEAEAPPLEQKFHEYN). Residues 31-51 (LALPKFPILFSLWLGSFLSSL) traverse the membrane as a helical segment. Topologically, residues 52–100 (DSTIVANIMNRVAEEFSESSKKQWIATSFLLTNTAFQPLYGKLSDITGR) are cytoplasmic. The chain crosses the membrane as a helical span at residues 101–121 (KSALLTAQFFFGLGCLLTCFA). Residues 122–131 (RNVTEFSIAR) are Vacuolar-facing. A glycan (N-linked (GlcNAc...) asparagine) is linked at Asn123. Residues 132 to 152 (AICGIGAGGLNAISSIAVSDI) form a helical membrane-spanning segment. The Cytoplasmic segment spans residues 153–166 (CTARERGVYQGYAN). The chain crosses the membrane as a helical span at residues 167–187 (IVFGFGQLLGAPLGGVFIETI). The Vacuolar portion of the chain corresponds to 188–190 (GWR). Residues 191–211 (ALFGIQVPVIMLCSVLAIKNI) traverse the membrane as a helical segment. Over 212–232 (NIKLFHVPPMKERYTLKNLSR) the chain is Cytoplasmic. A helical transmembrane segment spans residues 233–253 (IDIFGSLSLVATISGVLFLCS). The Vacuolar portion of the chain corresponds to 254 to 255 (SQ). The helical transmembrane segment at 256–276 (LNKLYLALFTIGSFIVFILVE) threads the bilayer. Residues 277–292 (RYYATEKILPFELLTR) lie on the Cytoplasmic side of the membrane. A helical transmembrane segment spans residues 293 to 313 (SFCLSSAVTVISSFVVFGEIF). The Vacuolar segment spans residues 314-331 (RSPIYLQLLQNISVTKTG). Asn324 carries an N-linked (GlcNAc...) asparagine glycan. The chain crosses the membrane as a helical span at residues 332 to 352 (LFLIFPSISVAVGSLVTGWVL). At 353 to 365 (RNTKINLAHCAYQ) the chain is on the cytoplasmic side. The chain crosses the membrane as a helical span at residues 366–386 (IIFGGMIMQLLGLGLGYFLLS). Topologically, residues 387–419 (HLNPDYTIYDMLESITFRSNSIWWKLIYVFASV) are vacuolar. The helical transmembrane segment at 420 to 440 (LVSFGYACLLVATLVSIVFTV) threads the bilayer. At 441 to 448 (EKSQQGTM) the chain is on the cytoplasmic side. The helical transmembrane segment at 449 to 469 (TGVFYLWRSIGNVLGASLTLV) threads the bilayer. At 470–528 (SYENSLSSMLWNYMFKTKRDDEYHFTKKQYYSLINDSSYLRGPNFPTDIFVRILDVYKK) the chain is on the vacuolar side. Asn504 is a glycosylation site (N-linked (GlcNAc...) asparagine). Residues 529–549 (AFLISYIPNIALAAVGIVLSL) traverse the membrane as a helical segment. The Cytoplasmic segment spans residues 550–562 (YLVKHTYKRSSSS).

The protein belongs to the major facilitator superfamily.

The protein resides in the vacuole membrane. In terms of biological role, transporter required for vacuolar uptake of at least histidine and lysine. The chain is Vacuolar basic amino acid transporter 1 (VBA1) from Saccharomyces cerevisiae (strain ATCC 204508 / S288c) (Baker's yeast).